A 537-amino-acid polypeptide reads, in one-letter code: MMAKSIQYDTAARHALEQGIDLLTEAVAVTLGPRGRNVVLEQKFGPPQIVNDGITIAKEIELDNPLANTGVALLRQVAAKTNDAAGDGTTTAVVLSHAMVKEGLRNIAAGANPMAIRRGIDQATQFLLDQIAEHALPVKDSNAISQVGTIAAGNDETVGQMIAAAMAKVGQQGVISLEEGQSMQTEVEVTEGMRFDKGYISPYFVTDAERMVTTLDDAYLLLTDKKITLVNALLPILENVTQTGKPLVIIAEDIEKEALATLVLNQLRGTVRVAGVKAPGFGDRRKDLLADIAVLTGGQVISEDTGLTLENATLEMMGRARQVVITKDHTTLISESNEAAVKARCEQIHRLIDETDSSFEKEKLHERLAQLSGGVAVIKVGAATETEMKDRKLKLEDAINATQAAVEEGIVPGGGTTLVHLAPQLEDWSAEHLVGDELIGAMILVRSLSAPLRQIVENAGLNGGVVVEQVKTLPFNTGYDALNNQYVDMFTAGIVDPAKVTSAGLRNAASIAGMVLTTECIIAEQSQATTKDLANAG.

Residues 30-33 (TLGP), 87-91 (DGTTT), G414, 480-482 (DAL), and D496 contribute to the ATP site.

It belongs to the chaperonin (HSP60) family. Forms a cylinder of 14 subunits composed of two heptameric rings stacked back-to-back. Interacts with the co-chaperonin GroES.

The protein localises to the cytoplasm. It catalyses the reaction ATP + H2O + a folded polypeptide = ADP + phosphate + an unfolded polypeptide.. Functionally, together with its co-chaperonin GroES, plays an essential role in assisting protein folding. The GroEL-GroES system forms a nano-cage that allows encapsulation of the non-native substrate proteins and provides a physical environment optimized to promote and accelerate protein folding. This chain is Chaperonin GroEL 3, found in Acaryochloris marina (strain MBIC 11017).